Reading from the N-terminus, the 258-residue chain is 3-deoxy-manno-octulosonate cytidylyltransferase (258 aa).

This sequence belongs to the KdsB family.

It is found in the cytoplasm. It carries out the reaction 3-deoxy-alpha-D-manno-oct-2-ulosonate + CTP = CMP-3-deoxy-beta-D-manno-octulosonate + diphosphate. It functions in the pathway nucleotide-sugar biosynthesis; CMP-3-deoxy-D-manno-octulosonate biosynthesis; CMP-3-deoxy-D-manno-octulosonate from 3-deoxy-D-manno-octulosonate and CTP: step 1/1. Its pathway is bacterial outer membrane biogenesis; lipopolysaccharide biosynthesis. Its function is as follows. Activates KDO (a required 8-carbon sugar) for incorporation into bacterial lipopolysaccharide in Gram-negative bacteria. This Blochmanniella floridana protein is 3-deoxy-manno-octulosonate cytidylyltransferase.